The sequence spans 483 residues: Probable pectate lyase 12 (483 aa).

Positions M1 to S24 are cleaved as a signal peptide. Residues N27 and N50 are each glycosylated (N-linked (GlcNAc...) asparagine). 3 residues coordinate Ca(2+): D220, D244, and D248. Residue R300 is part of the active site.

The protein belongs to the polysaccharide lyase 1 family. Ca(2+) is required as a cofactor.

It carries out the reaction Eliminative cleavage of (1-&gt;4)-alpha-D-galacturonan to give oligosaccharides with 4-deoxy-alpha-D-galact-4-enuronosyl groups at their non-reducing ends.. It participates in glycan metabolism; pectin degradation; 2-dehydro-3-deoxy-D-gluconate from pectin: step 2/5. This Arabidopsis thaliana (Mouse-ear cress) protein is Probable pectate lyase 12.